Consider the following 244-residue polypeptide: MKIKWPLQLWISLAVFVTIAVGTLLLLQPWQTIKTVTVQSTSIPSEKIERYAGIYPNTPSWKVTGQTQFIAQKIVKHDDKIDTAKVTQEGSHVTIDIAEKVTAGYIQKSKQWYVINRNGIQKKIEIPEGNAPVYTGFNNPADVKTVVSEFVKLELTLRQNISQINFSPNKDNANRLLIIMNDGNTVYATIGTFGKKISYYPGIAAQMPSKGVVDLQFGAYSYAYGTAQANGTKKKADNKAHQKQ.

Topologically, residues 1–6 (MKIKWP) are cytoplasmic. The helical transmembrane segment at 7 to 27 (LQLWISLAVFVTIAVGTLLLL) threads the bilayer. The region spanning 28–104 (QPWQTIKTVT…IDIAEKVTAG (77 aa)) is the POTRA domain. Residues 28–244 (QPWQTIKTVT…KADNKAHQKQ (217 aa)) lie on the Extracellular side of the membrane.

It belongs to the FtsQ/DivIB family. DivIB subfamily.

It is found in the cell membrane. In terms of biological role, cell division protein that may be involved in stabilizing or promoting the assembly of the division complex. The protein is Cell division protein DivIB of Leuconostoc kimchii (strain IMSNU 11154 / KCTC 2386 / IH25).